A 195-amino-acid chain; its full sequence is Ras-related protein Rab-31 (195 aa).

GTP-binding residues include Gly16, Gly18, Lys19, Ser20, Ser21, Asp32, and His33. Ser20 serves as a coordination point for Mg(2+). 2 consecutive short sequence motifs (switch) follow at residues 30–42 (HFDH…IGAS) and 63–79 (AGQE…YRGS). At Ser36 the chain carries Phosphoserine. The GTP site is built by Thr38, Gly64, Asn119, Asp122, Ala150, and Lys151. Residue Thr38 participates in Mg(2+) binding. The segment at 168 to 195 (PPLGPQENGNSGGIKLGNQSLQASRRCC) is disordered. Over residues 184–195 (GNQSLQASRRCC) the composition is skewed to polar residues. 2 S-geranylgeranyl cysteine lipidation sites follow: Cys194 and Cys195.

This sequence belongs to the small GTPase superfamily. Rab family. Interacts with OCRL. Interacts (in GDP-bound form) with RIN3 and GAPVD1, which function as guanine exchange factors (GEF). Interacts with EGFR. Interacts with NGFR. Interacts (in GTP-bound form) with EEA1. Interacts (in GTP-bound form) with APPL2; interaction contributes to or enhances recruitment of APPL2 to the phagosomes; interaction enhances Fc-gamma receptor-mediated phagocytosis through PI3K/Akt signaling in macrophages. Requires Mg(2+) as cofactor. As to expression, detected in brain astrocytes (at protein level).

It localises to the early endosome. Its subcellular location is the golgi apparatus. The protein localises to the trans-Golgi network. It is found in the trans-Golgi network membrane. The protein resides in the cytoplasmic vesicle. It localises to the phagosome. Its subcellular location is the phagosome membrane. The enzyme catalyses GTP + H2O = GDP + phosphate + H(+). Regulated by guanine nucleotide exchange factors (GEFs) including RIN3 and GAPVD1 which promote the exchange of bound GDP for free GTP. Regulated by GTPase activating proteins (GAPs) which increase the GTP hydrolysis activity. Inhibited by GDP dissociation inhibitors (GDIs) which prevent Rab-GDP dissociation. Functionally, the small GTPases Rab are key regulators of intracellular membrane trafficking, from the formation of transport vesicles to their fusion with membranes. Rabs cycle between an inactive GDP-bound form and an active GTP-bound form that is able to recruit to membranes different set of downstream effectors directly responsible for vesicle formation, movement, tethering and fusion. Required for the integrity and for normal function of the Golgi apparatus and the trans-Golgi network. Plays a role in insulin-stimulated translocation of GLUT4 to the cell membrane. Plays a role in the maturation of phagosomes that engulf pathogens, such as S.aureus and Mycobacterium. Plays a role in M6PR transport from the trans-Golgi network to endosomes. Plays a role in the internalization of EGFR from the cell membrane into endosomes. This chain is Ras-related protein Rab-31, found in Mus musculus (Mouse).